A 964-amino-acid chain; its full sequence is Iron-responsive element-binding protein 2 (964 aa).

The [4Fe-4S] cluster site is built by Cys513, Cys579, and Cys582.

It belongs to the aconitase/IPM isomerase family. Interacts with RBCK1 only in iron-rich conditions. Interacts (when associated with the 4Fe-4S) with FBXL5. Interacts with CIAO1 and CIAO2A. [4Fe-4S] cluster is required as a cofactor. In terms of processing, ubiquitinated and degraded by the proteasome in presence of high level of iron and oxygen. Ubiquitinated by a SCF complex containing FBXL5. Upon iron and oxygen depletion FBXL5 is degraded, preventing ubiquitination and allowing its RNA-binding activity.

The protein localises to the cytoplasm. Functionally, RNA-binding protein that binds to iron-responsive elements (IRES), which are stem-loop structures found in the 5'-UTR of ferritin, and delta aminolevulinic acid synthase mRNAs, and in the 3'-UTR of transferrin receptor mRNA. Binding to the IRE element in ferritin results in the repression of its mRNA translation. Binding of the protein to the transferrin receptor mRNA inhibits the degradation of this otherwise rapidly degraded mRNA. The sequence is that of Iron-responsive element-binding protein 2 (IREB2) from Sus scrofa (Pig).